The following is a 417-amino-acid chain: UDP-N-acetylglucosamine 1-carboxyvinyltransferase (417 aa).

22–23 (KN) provides a ligand contact to phosphoenolpyruvate. Arg91 contributes to the UDP-N-acetyl-alpha-D-glucosamine binding site. Cys115 (proton donor) is an active-site residue. Cys115 bears the 2-(S-cysteinyl)pyruvic acid O-phosphothioketal mark. UDP-N-acetyl-alpha-D-glucosamine is bound by residues 120–124 (RPVDL), Asp304, and Ile326.

It belongs to the EPSP synthase family. MurA subfamily.

Its subcellular location is the cytoplasm. It catalyses the reaction phosphoenolpyruvate + UDP-N-acetyl-alpha-D-glucosamine = UDP-N-acetyl-3-O-(1-carboxyvinyl)-alpha-D-glucosamine + phosphate. The protein operates within cell wall biogenesis; peptidoglycan biosynthesis. Cell wall formation. Adds enolpyruvyl to UDP-N-acetylglucosamine. In Nitratidesulfovibrio vulgaris (strain DP4) (Desulfovibrio vulgaris), this protein is UDP-N-acetylglucosamine 1-carboxyvinyltransferase.